The following is a 353-amino-acid chain: S-adenosylmethionine:tRNA ribosyltransferase-isomerase (353 aa).

This sequence belongs to the QueA family. In terms of assembly, monomer.

It localises to the cytoplasm. The catalysed reaction is 7-aminomethyl-7-carbaguanosine(34) in tRNA + S-adenosyl-L-methionine = epoxyqueuosine(34) in tRNA + adenine + L-methionine + 2 H(+). Its pathway is tRNA modification; tRNA-queuosine biosynthesis. Its function is as follows. Transfers and isomerizes the ribose moiety from AdoMet to the 7-aminomethyl group of 7-deazaguanine (preQ1-tRNA) to give epoxyqueuosine (oQ-tRNA). This is S-adenosylmethionine:tRNA ribosyltransferase-isomerase from Sodalis glossinidius (strain morsitans).